We begin with the raw amino-acid sequence, 474 residues long: tRNA-2-methylthio-N(6)-dimethylallyladenosine synthase (474 aa).

The region spanning 3–120 (KKLHIKTWGC…LPEMINSVRG (118 aa)) is the MTTase N-terminal domain. The [4Fe-4S] cluster site is built by Cys12, Cys49, Cys83, Cys157, Cys161, and Cys164. One can recognise a Radical SAM core domain in the interval 143–375 (RAEGPTAFVS…QERINQQAMA (233 aa)). In terms of domain architecture, TRAM spans 378–441 (RRMLGTTQRI…PNSLRGKVVR (64 aa)).

This sequence belongs to the methylthiotransferase family. MiaB subfamily. In terms of assembly, monomer. [4Fe-4S] cluster is required as a cofactor.

The protein localises to the cytoplasm. It catalyses the reaction N(6)-dimethylallyladenosine(37) in tRNA + (sulfur carrier)-SH + AH2 + 2 S-adenosyl-L-methionine = 2-methylsulfanyl-N(6)-dimethylallyladenosine(37) in tRNA + (sulfur carrier)-H + 5'-deoxyadenosine + L-methionine + A + S-adenosyl-L-homocysteine + 2 H(+). The enzyme catalyses N(6)-dimethylallyladenosine(37) in tRNA + (sulfur carrier)-SH + AH2 + S-adenosyl-L-methionine = 2-thio-N(6)-dimethylallyladenosine(37) in tRNA + (sulfur carrier)-H + 5'-deoxyadenosine + L-methionine + A + H(+). It carries out the reaction 2-thio-N(6)-dimethylallyladenosine(37) in tRNA + S-adenosyl-L-methionine = 2-methylsulfanyl-N(6)-dimethylallyladenosine(37) in tRNA + S-adenosyl-L-homocysteine + H(+). Functionally, catalyzes the methylthiolation of N6-(dimethylallyl)adenosine (i(6)A), leading to the formation of 2-methylthio-N6-(dimethylallyl)adenosine (ms(2)i(6)A) at position 37 in tRNAs that read codons beginning with uridine. This Salmonella typhimurium (strain LT2 / SGSC1412 / ATCC 700720) protein is tRNA-2-methylthio-N(6)-dimethylallyladenosine synthase.